A 102-amino-acid polypeptide reads, in one-letter code: Ferredoxin (102 aa).

4Fe-4S ferredoxin-type domains are found at residues 45 to 73 and 74 to 102; these read VSVNINRYKCGYCGACVGVCPKGALELVE and TWIEVDESTCIKCGICDRICPVGAIEVMK. [4Fe-4S] cluster is bound by residues Cys-54, Cys-57, Cys-60, Cys-64, Cys-83, Cys-86, Cys-89, and Cys-93.

It depends on [4Fe-4S] cluster as a cofactor.

The protein operates within membrane lipid metabolism; glycerophospholipid metabolism. Functionally, ferredoxin that is the specific electron donor for the geranylgeranyl reductase GGR involved in the biosynthesis of archaeal membrane lipids. The chain is Ferredoxin from Methanosarcina acetivorans (strain ATCC 35395 / DSM 2834 / JCM 12185 / C2A).